Consider the following 54-residue polypeptide: uncharacterized protein (54 aa).

The N-terminal stretch at 1-13 (MLLCFHMCQRIMW) is a signal peptide.

Its subcellular location is the secreted. This is an uncharacterized protein from Saccharomyces cerevisiae (strain ATCC 204508 / S288c) (Baker's yeast).